The chain runs to 32 residues: Beta-1,4-galactosyltransferase 1 (32 aa).

The protein belongs to the glycosyltransferase 7 family. The cofactor is Mn(2+). The soluble form derives from the membrane form by proteolytic processing.

It is found in the golgi apparatus. It localises to the golgi stack membrane. The protein localises to the secreted. The protein resides in the cell membrane. Its subcellular location is the cell projection. It is found in the filopodium. It carries out the reaction D-glucose + UDP-alpha-D-galactose = lactose + UDP + H(+). It catalyses the reaction an N-acetyl-beta-D-glucosaminyl derivative + UDP-alpha-D-galactose = a beta-D-galactosyl-(1-&gt;4)-N-acetyl-beta-D-glucosaminyl derivative + UDP + H(+). The catalysed reaction is N-acetyl-D-glucosamine + UDP-alpha-D-galactose = beta-D-galactosyl-(1-&gt;4)-N-acetyl-D-glucosamine + UDP + H(+). The enzyme catalyses a beta-D-GlcNAc-(1-&gt;3)-beta-D-Gal-(1-&gt;4)-beta-D-Glc-(1&lt;-&gt;1)-Cer(d18:1(4E)) + UDP-alpha-D-galactose = a neolactoside nLc4Cer(d18:1(4E)) + UDP + H(+). It carries out the reaction a beta-D-glucosylceramide + UDP-alpha-D-galactose = a beta-D-galactosyl-(1-&gt;4)-beta-D-glucosyl-(1&lt;-&gt;1)-ceramide + UDP + H(+). It catalyses the reaction a neolactoside IV(3)-beta-GlcNAc-nLc4Cer + UDP-alpha-D-galactose = a neolactoside nLc6Cer + UDP + H(+). It functions in the pathway protein modification; protein glycosylation. This protein is responsible for the synthesis of complex-type N-linked oligosaccharides in many glycoproteins as well as the carbohydrate moieties of glycolipids. In Rattus norvegicus (Rat), this protein is Beta-1,4-galactosyltransferase 1.